Here is a 375-residue protein sequence, read N- to C-terminus: MEKFYTSLGLMSGTSMDGVDASIIRSDGESNYEPIFDKYFEYDGVIYSNLLNLRDKINSIKDLQDNSYQINELERKITLFHAKISKEIIKNAGVDVDIVGFHGQTIFHNAQEKISKQIGDGNLLSSLLKKNVVYNFRENDIHNGGQGAPLAPIFHNLLINQNKIEKPACVLNIGGIANITLVISKNNEDLKSFDVGPGNCLLDEWVRRHTQMKYDENGKASNLGKTSEVILNQAIDNFDNISNQKKLSFDIKDFDLSFVKGLTYEDGLSTLVDFTAIIIYQSILKSINSEENKKLLIIVCGGGRKNLSLMESIRKRLPKNIYLKIIDDYKVDGDFIESQAFAYLAIRSALKKVISFPNTTNVKKPSIGGVLVKNY.

13-20 (GTSMDGVD) lines the ATP pocket.

The protein belongs to the anhydro-N-acetylmuramic acid kinase family.

The enzyme catalyses 1,6-anhydro-N-acetyl-beta-muramate + ATP + H2O = N-acetyl-D-muramate 6-phosphate + ADP + H(+). Its pathway is amino-sugar metabolism; 1,6-anhydro-N-acetylmuramate degradation. It participates in cell wall biogenesis; peptidoglycan recycling. Catalyzes the specific phosphorylation of 1,6-anhydro-N-acetylmuramic acid (anhMurNAc) with the simultaneous cleavage of the 1,6-anhydro ring, generating MurNAc-6-P. Is required for the utilization of anhMurNAc either imported from the medium or derived from its own cell wall murein, and thus plays a role in cell wall recycling. In Pelagibacter ubique (strain HTCC1062), this protein is Anhydro-N-acetylmuramic acid kinase.